Reading from the N-terminus, the 591-residue chain is Aspartate--tRNA(Asp/Asn) ligase (591 aa).

Glu-174 is an L-aspartate binding site. The aspartate stretch occupies residues 198-201 (QLFK). Arg-220 lines the L-aspartate pocket. ATP is bound by residues 220–222 (RDE) and Gln-229. His-450 contributes to the L-aspartate binding site. Residue Glu-483 participates in ATP binding. Position 490 (Arg-490) interacts with L-aspartate. 535–538 (GLDR) lines the ATP pocket.

It belongs to the class-II aminoacyl-tRNA synthetase family. Type 1 subfamily. As to quaternary structure, homodimer.

It is found in the cytoplasm. It catalyses the reaction tRNA(Asx) + L-aspartate + ATP = L-aspartyl-tRNA(Asx) + AMP + diphosphate. Functionally, aspartyl-tRNA synthetase with relaxed tRNA specificity since it is able to aspartylate not only its cognate tRNA(Asp) but also tRNA(Asn). Reaction proceeds in two steps: L-aspartate is first activated by ATP to form Asp-AMP and then transferred to the acceptor end of tRNA(Asp/Asn). In Pseudomonas putida (strain W619), this protein is Aspartate--tRNA(Asp/Asn) ligase.